We begin with the raw amino-acid sequence, 253 residues long: Uridylate kinase (253 aa).

Position 9 to 12 (K9 to G12) interacts with ATP. A UMP-binding site is contributed by G51. ATP-binding residues include G52 and R56. UMP-binding positions include D72 and S133 to T140. ATP is bound by residues T160, Y166, and D169.

Belongs to the UMP kinase family. As to quaternary structure, homohexamer.

It localises to the cytoplasm. The enzyme catalyses UMP + ATP = UDP + ADP. It participates in pyrimidine metabolism; CTP biosynthesis via de novo pathway; UDP from UMP (UMPK route): step 1/1. With respect to regulation, inhibited by UTP. Its function is as follows. Catalyzes the reversible phosphorylation of UMP to UDP. The protein is Uridylate kinase of Synechococcus sp. (strain JA-2-3B'a(2-13)) (Cyanobacteria bacterium Yellowstone B-Prime).